The primary structure comprises 472 residues: Methanethiol oxidase (472 aa).

It belongs to the selenium-binding protein family.

Its subcellular location is the nucleus. The protein localises to the cytoplasm. The protein resides in the cytosol. It is found in the membrane. It carries out the reaction methanethiol + O2 + H2O = hydrogen sulfide + formaldehyde + H2O2 + H(+). The protein operates within organosulfur degradation. Functionally, catalyzes the oxidation of methanethiol, an organosulfur compound known to be produced in substantial amounts by gut bacteria. Selenium-binding protein which may be involved in the sensing of reactive xenobiotics in the cytoplasm. May be involved in intra-Golgi protein transport. The polypeptide is Methanethiol oxidase (selenbp1-a) (Xenopus laevis (African clawed frog)).